Reading from the N-terminus, the 369-residue chain is Peptide chain release factor 2 (369 aa).

An N5-methylglutamine modification is found at Gln252.

The protein belongs to the prokaryotic/mitochondrial release factor family. In terms of processing, methylated by PrmC. Methylation increases the termination efficiency of RF2.

The protein resides in the cytoplasm. In terms of biological role, peptide chain release factor 2 directs the termination of translation in response to the peptide chain termination codons UGA and UAA. This is Peptide chain release factor 2 from Staphylococcus aureus (strain bovine RF122 / ET3-1).